Reading from the N-terminus, the 145-residue chain is 3-hydroxyacyl-[acyl-carrier-protein] dehydratase FabZ (145 aa).

His-49 is an active-site residue.

It belongs to the thioester dehydratase family. FabZ subfamily.

It localises to the cytoplasm. The catalysed reaction is a (3R)-hydroxyacyl-[ACP] = a (2E)-enoyl-[ACP] + H2O. Functionally, involved in unsaturated fatty acids biosynthesis. Catalyzes the dehydration of short chain beta-hydroxyacyl-ACPs and long chain saturated and unsaturated beta-hydroxyacyl-ACPs. This Rickettsia africae (strain ESF-5) protein is 3-hydroxyacyl-[acyl-carrier-protein] dehydratase FabZ.